Reading from the N-terminus, the 238-residue chain is Snake venom metalloproteinase HF-1 (238 aa).

One can recognise a Peptidase M12B domain in the interval Arg17–Pro221. Asp106 provides a ligand contact to Ca(2+). 2 disulfide bridges follow: Cys130–Cys216 and Cys174–Cys181. His158 contacts Zn(2+). Glu159 is an active-site residue. Zn(2+) is bound by residues His162 and His168. Ca(2+) is bound by residues Cys216 and Asn219.

As to quaternary structure, monomer. The cofactor is Zn(2+). In terms of tissue distribution, expressed by the venom gland.

The protein resides in the secreted. With respect to regulation, inhibited by EDTA and EGTA. Inhibited by serum and antihemorrhagic factors Da2-I and Da2-II from D.albiventris. Not inhibited by PMSF or SBT-I. Its function is as follows. Snake venom zinc metalloprotease that is weakly hemorrhagic and has Aalpha, Bbeta fibrinogenolytic activities. Cleaves the Aalpha chain of fibrinogen first, followed by the Bbeta chain and shows no effect on the gamma chain. Has caseinolytic activity. Induces dose-dependent edema. This chain is Snake venom metalloproteinase HF-1, found in Bothrops marajoensis (Marajo lancehead).